We begin with the raw amino-acid sequence, 309 residues long: Homoserine O-succinyltransferase (309 aa).

The active-site Acyl-thioester intermediate is cysteine 142. Residues lysine 163 and serine 192 each coordinate substrate. Histidine 235 functions as the Proton acceptor in the catalytic mechanism. Glutamate 237 is an active-site residue. Arginine 249 serves as a coordination point for substrate.

This sequence belongs to the MetA family.

It is found in the cytoplasm. The enzyme catalyses L-homoserine + succinyl-CoA = O-succinyl-L-homoserine + CoA. It functions in the pathway amino-acid biosynthesis; L-methionine biosynthesis via de novo pathway; O-succinyl-L-homoserine from L-homoserine: step 1/1. Its function is as follows. Transfers a succinyl group from succinyl-CoA to L-homoserine, forming succinyl-L-homoserine. The sequence is that of Homoserine O-succinyltransferase from Proteus mirabilis (strain HI4320).